A 429-amino-acid polypeptide reads, in one-letter code: Glucose-1-phosphate adenylyltransferase (429 aa).

Residues Gly-162, 177 to 178 (EK), and Ser-209 contribute to the alpha-D-glucose 1-phosphate site.

The protein belongs to the bacterial/plant glucose-1-phosphate adenylyltransferase family. Homotetramer.

The enzyme catalyses alpha-D-glucose 1-phosphate + ATP + H(+) = ADP-alpha-D-glucose + diphosphate. It participates in glycan biosynthesis; glycogen biosynthesis. Involved in the biosynthesis of ADP-glucose, a building block required for the elongation reactions to produce glycogen. Catalyzes the reaction between ATP and alpha-D-glucose 1-phosphate (G1P) to produce pyrophosphate and ADP-Glc. In Gloeothece citriformis (strain PCC 7424) (Cyanothece sp. (strain PCC 7424)), this protein is Glucose-1-phosphate adenylyltransferase.